The primary structure comprises 295 residues: Pyridoxal 5'-phosphate synthase subunit PdxS (295 aa).

Position 25 (Asp-25) interacts with D-ribose 5-phosphate. The active-site Schiff-base intermediate with D-ribose 5-phosphate is Lys-82. Gly-154 is a D-ribose 5-phosphate binding site. Arg-166 serves as a coordination point for D-glyceraldehyde 3-phosphate. D-ribose 5-phosphate contacts are provided by residues Gly-215 and 236–237; that span reads GS.

It belongs to the PdxS/SNZ family. As to quaternary structure, in the presence of PdxT, forms a dodecamer of heterodimers.

It catalyses the reaction aldehydo-D-ribose 5-phosphate + D-glyceraldehyde 3-phosphate + L-glutamine = pyridoxal 5'-phosphate + L-glutamate + phosphate + 3 H2O + H(+). The protein operates within cofactor biosynthesis; pyridoxal 5'-phosphate biosynthesis. In terms of biological role, catalyzes the formation of pyridoxal 5'-phosphate from ribose 5-phosphate (RBP), glyceraldehyde 3-phosphate (G3P) and ammonia. The ammonia is provided by the PdxT subunit. Can also use ribulose 5-phosphate and dihydroxyacetone phosphate as substrates, resulting from enzyme-catalyzed isomerization of RBP and G3P, respectively. This chain is Pyridoxal 5'-phosphate synthase subunit PdxS, found in Listeria monocytogenes serotype 4b (strain CLIP80459).